The sequence spans 164 residues: Phosphopantetheine adenylyltransferase (164 aa).

Residue threonine 14 coordinates substrate. Residues 14 to 15 (TF) and histidine 22 each bind ATP. Lysine 46, leucine 78, and arginine 92 together coordinate substrate. ATP-binding positions include 93–95 (GLR), glutamate 103, and 128–134 (HAFISST).

This sequence belongs to the bacterial CoaD family. In terms of assembly, homohexamer. The cofactor is Mg(2+).

It localises to the cytoplasm. It catalyses the reaction (R)-4'-phosphopantetheine + ATP + H(+) = 3'-dephospho-CoA + diphosphate. Its pathway is cofactor biosynthesis; coenzyme A biosynthesis; CoA from (R)-pantothenate: step 4/5. Its function is as follows. Reversibly transfers an adenylyl group from ATP to 4'-phosphopantetheine, yielding dephospho-CoA (dPCoA) and pyrophosphate. In Vibrio cholerae serotype O1 (strain ATCC 39541 / Classical Ogawa 395 / O395), this protein is Phosphopantetheine adenylyltransferase.